Reading from the N-terminus, the 155-residue chain is SsrA-binding protein (155 aa).

The span at 127 to 149 (KKDYDKRNDMRKKEAKREMERTF) shows a compositional bias: basic and acidic residues. The segment at 127–155 (KKDYDKRNDMRKKEAKREMERTFKSKNQY) is disordered.

Belongs to the SmpB family.

The protein localises to the cytoplasm. In terms of biological role, required for rescue of stalled ribosomes mediated by trans-translation. Binds to transfer-messenger RNA (tmRNA), required for stable association of tmRNA with ribosomes. tmRNA and SmpB together mimic tRNA shape, replacing the anticodon stem-loop with SmpB. tmRNA is encoded by the ssrA gene; the 2 termini fold to resemble tRNA(Ala) and it encodes a 'tag peptide', a short internal open reading frame. During trans-translation Ala-aminoacylated tmRNA acts like a tRNA, entering the A-site of stalled ribosomes, displacing the stalled mRNA. The ribosome then switches to translate the ORF on the tmRNA; the nascent peptide is terminated with the 'tag peptide' encoded by the tmRNA and targeted for degradation. The ribosome is freed to recommence translation, which seems to be the essential function of trans-translation. The sequence is that of SsrA-binding protein from Lysinibacillus sphaericus (strain C3-41).